The primary structure comprises 461 residues: Anthocyanidin 3-O-glucoside 5-O-glucosyltransferase (461 aa).

An N-terminal signal peptide occupies residues 1–15 (MSRAHVLLATFPAQG). The Proton acceptor role is filled by histidine 16. Histidine 16 serves as a coordination point for an anthocyanidin. Residues glutamine 338, histidine 353, tryptophan 356, asparagine 357, serine 358, glutamate 361, aspartate 377, and glutamine 378 each coordinate UDP-alpha-D-glucose.

This sequence belongs to the UDP-glycosyltransferase family.

The enzyme catalyses an anthocyanidin 3-O-beta-D-glucoside + UDP-alpha-D-glucose = an anthocyanidin 3,5-di-O-beta-D-glucoside + UDP + 2 H(+). Its pathway is pigment biosynthesis; anthocyanin biosynthesis. In terms of biological role, catalyzes the glucosylation at the O-5 position of anthocyanidin 3-glucosides to form anthocyanidin 3,5-di-O-glucosides using UDP-glucose as sugar donor. Anthocyanidin 3,5-di-O-glucosides are molecules that are responsible for pigmentation. Also acts on anthocyanidin 3-O-(6-O-malonylglucoside). Much less active with hydroxycinnamoylglucose derivatives. No activity in the absence of the 3-O-glucoside group. This is Anthocyanidin 3-O-glucoside 5-O-glucosyltransferase (HGT8) from Verbena hybrida (Garden vervain).